Consider the following 188-residue polypeptide: Elongation factor P (188 aa).

It belongs to the elongation factor P family.

It localises to the cytoplasm. The protein operates within protein biosynthesis; polypeptide chain elongation. Its function is as follows. Involved in peptide bond synthesis. Stimulates efficient translation and peptide-bond synthesis on native or reconstituted 70S ribosomes in vitro. Probably functions indirectly by altering the affinity of the ribosome for aminoacyl-tRNA, thus increasing their reactivity as acceptors for peptidyl transferase. This is Elongation factor P from Methylobacterium sp. (strain 4-46).